A 156-amino-acid chain; its full sequence is Protein-export protein SecB (156 aa).

It belongs to the SecB family. Homotetramer, a dimer of dimers. One homotetramer interacts with 1 SecA dimer.

The protein localises to the cytoplasm. Its function is as follows. One of the proteins required for the normal export of preproteins out of the cell cytoplasm. It is a molecular chaperone that binds to a subset of precursor proteins, maintaining them in a translocation-competent state. It also specifically binds to its receptor SecA. This is Protein-export protein SecB from Xanthobacter autotrophicus (strain ATCC BAA-1158 / Py2).